The chain runs to 464 residues: Sensor protein IrlS (464 aa).

The Periplasmic portion of the chain corresponds to 1 to 13 (MIRRLLPRTLRAR). Residues 14 to 34 (LTALIILSTAATLALSGVALY) traverse the membrane as a helical segment. The Cytoplasmic segment spans residues 35 to 166 (SALHNRLVGM…DHALLRAYAY (132 aa)). The chain crosses the membrane as a helical span at residues 167–187 (TVVVIEVLAVVLTAALAYGIA). Residues 188–241 (MLGLSPLRRLVARAEQMSSSRLAQPLPELDTSGELKEMEHAFNAMLKRLDESFV) enclose the HAMP domain. Residues 188 to 464 (MLGLSPLRRL…FWLKFPAHAA (277 aa)) are Periplasmic-facing. The region spanning 249-463 (NLAHDMRTPL…TFWLKFPAHA (215 aa)) is the Histidine kinase domain. His252 bears the Phosphohistidine; by autocatalysis mark.

Its subcellular location is the cell inner membrane. The catalysed reaction is ATP + protein L-histidine = ADP + protein N-phospho-L-histidine.. Functionally, member of the two-component regulatory system IrlR/IrlS. May be involved in invasion of eukaryotic cells and heavy-metal resistance. Probably activates IrlR by phosphorylation. This is Sensor protein IrlS (irlS) from Burkholderia pseudomallei (strain K96243).